The following is a 101-amino-acid chain: Small ribosomal subunit protein bS18c (101 aa).

The span at 1-19 (MNKSKRPFTKSKRSFRRRL) shows a compositional bias: basic residues. Residues 1–20 (MNKSKRPFTKSKRSFRRRLP) are disordered.

It belongs to the bacterial ribosomal protein bS18 family. In terms of assembly, part of the 30S ribosomal subunit.

The protein localises to the plastid. The protein resides in the chloroplast. The polypeptide is Small ribosomal subunit protein bS18c (Arabis hirsuta (Hairy rock-cress)).